The sequence spans 294 residues: Non-selective voltage-gated ion channel VDAC2 (294 aa).

Ala-2 is subject to N-acetylalanine. Residues Lys-23 and Lys-31 each contribute to the ATP site. Lys-31 is subject to N6-acetyllysine; alternate. N6-succinyllysine; alternate is present on Lys-31. Lys-31 participates in a covalent cross-link: Glycyl lysine isopeptide (Lys-Gly) (interchain with G-Cter in ubiquitin); alternate. 2 beta stranded membrane passes run Leu-37–Ser-46 and Val-50–Ser-58. Lys-64 is covalently cross-linked (Glycyl lysine isopeptide (Lys-Gly) (interchain with G-Cter in ubiquitin)). Residues Val-65–Trp-75 traverse the membrane as a beta stranded segment. Tyr-78 bears the Phosphotyrosine mark. A run of 3 beta stranded transmembrane segments spans residues Leu-80–Asn-87, Thr-91–Asp-100, and Leu-106–Ser-115. Phosphothreonine is present on Thr-118. Lys-120 is subject to N6-acetyllysine; alternate. Lys-120 participates in a covalent cross-link: Glycyl lysine isopeptide (Lys-Gly) (interchain with G-Cter in ubiquitin); alternate. Lys-121 is covalently cross-linked (Glycyl lysine isopeptide (Lys-Gly) (interchain with G-Cter in ubiquitin)). A run of 4 beta stranded transmembrane segments spans residues Ser-122–Arg-131, Val-134–Asp-141, Ala-148–Gly-156, and Leu-161–Asp-169. Lys-172 is covalently cross-linked (Glycyl lysine isopeptide (Lys-Gly) (interchain with G-Cter in ubiquitin)). Beta stranded transmembrane passes span Lys-174–Thr-186, Phe-189–Asn-196, Glu-200–Val-209, Leu-213–Thr-222, Arg-229–Leu-238, and Ala-242–Asn-249. A Phosphoserine modification is found at Ser-251. NAD(+) is bound by residues Leu-253 to Gly-255 and Ser-271 to Asp-275. A run of 2 beta stranded transmembrane segments spans residues Leu-253–Leu-262 and Gly-265–Val-274. Position 277 is an N6-acetyllysine; alternate (Lys-277). Residue Lys-277 forms a Glycyl lysine isopeptide (Lys-Gly) (interchain with G-Cter in ubiquitin); alternate linkage. Residues His-284–Glu-293 form a beta stranded membrane-spanning segment.

This sequence belongs to the eukaryotic mitochondrial porin family. As to quaternary structure, monomer, homodimer and higher order oligomers; formation of higher order structures is necessary for scramblase activity. Interacts with ARMC12 in a TBC1D21-dependent manner. Interacts with KLC3. Interacts with SPATA33. Interacts with PPP3CC in a SPATA33-dependent manner. Ubiquitinated by PRKN during mitophagy, leading to its degradation and enhancement of mitophagy. Deubiquitinated by USP30.

It is found in the mitochondrion outer membrane. Its subcellular location is the membrane. The catalysed reaction is chloride(in) = chloride(out). The enzyme catalyses K(+)(in) = K(+)(out). It carries out the reaction a 1,2-diacyl-sn-glycero-3-phospho-L-serine(in) = a 1,2-diacyl-sn-glycero-3-phospho-L-serine(out). It catalyses the reaction a 1,2-diacyl-sn-glycero-3-phosphocholine(in) = a 1,2-diacyl-sn-glycero-3-phosphocholine(out). The catalysed reaction is a 1,2-diacyl-sn-glycero-3-phospho-(1D-myo-inositol)(in) = a 1,2-diacyl-sn-glycero-3-phospho-(1D-myo-inositol)(out). Functionally, non-selective voltage-gated ion channel that mediates the transport of anions and cations through the mitochondrion outer membrane and plasma membrane. The channel adopts an open conformation at zero mV and a closed conformation at both positive and negative potentials. There are two populations of channels; the main that functions in a lower open-state conductance with lower ion selectivity, that switch, in a voltage-dependent manner, from the open to a low-conducting 'closed' state and the other that has a normal ion selectivity in the typical high conductance, 'open' state. Binds various lipids, including the sphingolipid ceramide, the phospholipid phosphatidylcholine, and the sterols cholesterol and oxysterol. Binding of ceramide promotes the mitochondrial outer membrane permeabilization (MOMP) apoptotic pathway. In terms of biological role, catalyzes the scrambling of phospholipids across the outer mitochondrial membrane; the mechanism is unrelated to channel activity and is capable of translocating both anionic and zwitterionic phospholipids. The protein is Non-selective voltage-gated ion channel VDAC2 of Sus scrofa (Pig).